A 431-amino-acid chain; its full sequence is 3-deoxy-D-manno-octulosonic acid transferase (431 aa).

A helical; Signal-anchor transmembrane segment spans residues 5–27; it reads WLTSRLYDAFLVCAFFVSAPRIF. Glu67 (proton acceptor) is an active-site residue. CMP contacts are provided by residues 275–276, 315–317, and 342–345; these read PR, MGV, and NLLE.

This sequence belongs to the glycosyltransferase group 1 family. Glycosyltransferase 30 subfamily.

It localises to the cell inner membrane. It carries out the reaction lipid IVA (E. coli) + CMP-3-deoxy-beta-D-manno-octulosonate = alpha-Kdo-(2-&gt;6)-lipid IVA (E. coli) + CMP + H(+). It catalyses the reaction alpha-Kdo-(2-&gt;6)-lipid IVA (E. coli) + CMP-3-deoxy-beta-D-manno-octulosonate = alpha-Kdo-(2-&gt;4)-alpha-Kdo-(2-&gt;6)-lipid IVA (E. coli) + CMP + H(+). The catalysed reaction is alpha-Kdo-(2-&gt;4)-alpha-Kdo-(2-&gt;6)-lipid IVA (E. coli) + CMP-3-deoxy-beta-D-manno-octulosonate = alpha-Kdo-(2-&gt;8)-alpha-Kdo-(2-&gt;4)-alpha-Kdo-(2-&gt;6)-lipid IVA (E. coli) + CMP + H(+). Its pathway is bacterial outer membrane biogenesis; LPS core biosynthesis. Its function is as follows. Involved in lipopolysaccharide (LPS) biosynthesis. Catalyzes the transfer of three 3-deoxy-D-manno-octulosonate (Kdo) residues from CMP-Kdo to lipid IV(A), the tetraacyldisaccharide-1,4'-bisphosphate precursor of lipid A. Thus generates the genus-specific LPS epitope of Chlamydia, composed of the trisaccharide alpha-Kdo-(2-&gt;8)-alpha-Kdo-(2-&gt;4)-alpha-Kdo. The sequence is that of 3-deoxy-D-manno-octulosonic acid transferase (waaA) from Chlamydia trachomatis serovar A (strain ATCC VR-571B / DSM 19440 / HAR-13).